The following is a 370-amino-acid chain: Lipoyl synthase, mitochondrial (370 aa).

7 residues coordinate [4Fe-4S] cluster: cysteine 104, cysteine 109, cysteine 115, cysteine 135, cysteine 139, cysteine 142, and serine 350. Residues glycine 118–leucine 339 enclose the Radical SAM core domain.

Belongs to the radical SAM superfamily. Lipoyl synthase family. Requires [4Fe-4S] cluster as cofactor.

It localises to the mitochondrion. It carries out the reaction [[Fe-S] cluster scaffold protein carrying a second [4Fe-4S](2+) cluster] + N(6)-octanoyl-L-lysyl-[protein] + 2 oxidized [2Fe-2S]-[ferredoxin] + 2 S-adenosyl-L-methionine + 4 H(+) = [[Fe-S] cluster scaffold protein] + N(6)-[(R)-dihydrolipoyl]-L-lysyl-[protein] + 4 Fe(3+) + 2 hydrogen sulfide + 2 5'-deoxyadenosine + 2 L-methionine + 2 reduced [2Fe-2S]-[ferredoxin]. It participates in protein modification; protein lipoylation via endogenous pathway; protein N(6)-(lipoyl)lysine from octanoyl-[acyl-carrier-protein]: step 2/2. Its function is as follows. Catalyzes the radical-mediated insertion of two sulfur atoms into the C-6 and C-8 positions of the octanoyl moiety bound to the lipoyl domains of lipoate-dependent enzymes, thereby converting the octanoylated domains into lipoylated derivatives. In Kluyveromyces lactis (strain ATCC 8585 / CBS 2359 / DSM 70799 / NBRC 1267 / NRRL Y-1140 / WM37) (Yeast), this protein is Lipoyl synthase, mitochondrial.